We begin with the raw amino-acid sequence, 511 residues long: Coiled-coil domain-containing protein 125 (511 aa).

A compositionally biased stretch (polar residues) spans 1 to 12 (MSKVARSSSESD). The disordered stretch occupies residues 1–110 (MSKVARSSSE…TVDSNSELSN (110 aa)). The span at 43–54 (EFSHRSRKRSDG) shows a compositional bias: basic and acidic residues. Over residues 83–108 (QDTFPQVSRISNYRRQSSTVDSNSEL) the composition is skewed to polar residues. Coiled coils occupy residues 105-243 (NSEL…LEAL) and 293-325 (RMAASTRKLLLQLKQELEILQKSKEEAYVMADA). S504 carries the post-translational modification Phosphoserine.

The protein localises to the cytoplasm. Functionally, may be involved in the regulation of cell migration. The sequence is that of Coiled-coil domain-containing protein 125 (CCDC125) from Homo sapiens (Human).